The following is a 333-amino-acid chain: L-lactate dehydrogenase (333 aa).

Residues 29–57 (GQVGMACAYSILQQNLANELCLVDVVADK) and Arg99 each bind NAD(+). Residues Arg106, Asn138, and Arg169 each coordinate substrate. Asn138 is an NAD(+) binding site. The Proton acceptor role is filled by His193. Thr249 serves as a coordination point for substrate.

The protein belongs to the LDH/MDH superfamily. LDH family. Homotetramer.

The protein localises to the cytoplasm. It carries out the reaction (S)-lactate + NAD(+) = pyruvate + NADH + H(+). It functions in the pathway fermentation; pyruvate fermentation to lactate; (S)-lactate from pyruvate: step 1/1. This chain is L-lactate dehydrogenase (ldh-1), found in Caenorhabditis elegans.